The sequence spans 311 residues: tRNA dimethylallyltransferase (311 aa).

9 to 16 (GPTAVGKT) is a binding site for ATP. 11-16 (TAVGKT) lines the substrate pocket. The interval 34-37 (DSMQ) is interaction with substrate tRNA.

Belongs to the IPP transferase family. As to quaternary structure, monomer. Mg(2+) is required as a cofactor.

The catalysed reaction is adenosine(37) in tRNA + dimethylallyl diphosphate = N(6)-dimethylallyladenosine(37) in tRNA + diphosphate. Functionally, catalyzes the transfer of a dimethylallyl group onto the adenine at position 37 in tRNAs that read codons beginning with uridine, leading to the formation of N6-(dimethylallyl)adenosine (i(6)A). In Clostridium botulinum (strain Okra / Type B1), this protein is tRNA dimethylallyltransferase.